The primary structure comprises 407 residues: Obg-like ATPase homolog (407 aa).

The region spanning 46-301 (LKIGIVGMPN…LTPEEAAQEC (256 aa)) is the OBG-type G domain. ATP contacts are provided by residues 55–60 (NIGKST) and Met-249. A TGS domain is found at 322–405 (NLIHYFTASE…EPGDIIFWKI (84 aa)).

It belongs to the TRAFAC class OBG-HflX-like GTPase superfamily. OBG GTPase family.

Functionally, hydrolyzes ATP, and can also hydrolyze GTP with lower efficiency. Has lower affinity for GTP. The sequence is that of Obg-like ATPase homolog from Schizosaccharomyces pombe (strain 972 / ATCC 24843) (Fission yeast).